The following is a 197-amino-acid chain: Nucleoid occlusion factor SlmA (197 aa).

The HTH tetR-type domain maps to 7–67 (INRREHILQC…GLIEFIEESL (61 aa)). A DNA-binding region (H-T-H motif) is located at residues 30 to 49 (TTAKLAAEVGVSEAALYRHF). The stretch at 109–136 (DALLGENERLRSRISQLFSKIETHLKQI) forms a coiled coil.

The protein belongs to the nucleoid occlusion factor SlmA family. In terms of assembly, homodimer. Interacts with FtsZ.

It localises to the cytoplasm. It is found in the nucleoid. Functionally, required for nucleoid occlusion (NO) phenomenon, which prevents Z-ring formation and cell division over the nucleoid. Acts as a DNA-associated cell division inhibitor that binds simultaneously chromosomal DNA and FtsZ, and disrupts the assembly of FtsZ polymers. SlmA-DNA-binding sequences (SBS) are dispersed on non-Ter regions of the chromosome, preventing FtsZ polymerization at these regions. This Shewanella pealeana (strain ATCC 700345 / ANG-SQ1) protein is Nucleoid occlusion factor SlmA.